The primary structure comprises 731 residues: Replication restart protein PriA (731 aa).

The 3'BD stretch occupies residues 1–98 (MSVAHVALPV…HPIGDVLFHA (98 aa)). Residues 115 to 177 (WYWFATEQGQ…RGKGLAELAC (63 aa)) are WH. Residues 200 to 375 (TEQATAVGAI…VRQGKYRQLT (176 aa)) are helicase lobe 1. Positions 210-376 (HSAADRFSAW…RQGKYRQLTL (167 aa)) constitute a Helicase ATP-binding domain. Position 223-230 (223-230 (GITGSGKT)) interacts with ATP. Residues Gly-226, Gly-228, Lys-229, Thr-230, Glu-231, and Arg-263 each coordinate ADP. Positions 319 to 322 (DEEH) match the DEAH box motif. Residues 326 to 340 (YKQQEGWRYHARDLA) carry the Aromatic-rich loop (ARL) motif. A helicase lobe 2, N-terminus region spans residues 387–430 (QQHVLDLKGQPLQAGLSPALISRMRQHLQADNQVILFLNRRGFA). The CRR stretch occupies residues 431–485 (PALLCHDCGWIAECPRCDSYYTLHQAQHHLRCHHCDSQRPIPRQCPSCGSTHLVP). Residues Cys-435, Cys-438, Cys-444, Cys-447, Cys-462, Cys-465, Cys-475, and Cys-478 each contribute to the Zn(2+) site. A Helicase C-terminal domain is found at 470–637 (PIPRQCPSCG…QLPPWTSHVL (168 aa)). The helicase lobe 2, C-terminus stretch occupies residues 486-626 (VGIGTEQLEQ…AEQALAERQT (141 aa)). Residue Lys-543 participates in ADP binding. The segment at 633 to 731 (TSHVLIRAED…WVLDVDPIEG (99 aa)) is CTD.

It belongs to the helicase family. PriA subfamily. Binds SSB. Component of the replication restart primosome. It depends on Zn(2+) as a cofactor.

The enzyme catalyses Couples ATP hydrolysis with the unwinding of duplex DNA by translocating in the 3'-5' direction.. It catalyses the reaction ATP + H2O = ADP + phosphate + H(+). Its activity is regulated as follows. ATPase activity is stimulated by single-stranded binding protein (SSB). Its function is as follows. Initiates the restart of stalled replication forks, which reloads the replicative helicase on sites other than the origin of replication. Recognizes and binds to abandoned replication forks and remodels them to uncover a helicase loading site. Promotes assembly of the primosome at these replication forks. In terms of biological role, recognizes abandoned replication forks and remodels SSB on ssDNA to uncover a loading site for DnaB. Binds replication fork DNA, has DNA-dependent ATPase activity in the presence of replication fork DNA, restores normal cell growth and SOS induction to E.coli mutant pirA304. This is Replication restart protein PriA from Klebsiella pneumoniae subsp. pneumoniae (strain ATCC 700721 / MGH 78578).